Reading from the N-terminus, the 393-residue chain is G protein-activated inward rectifier potassium channel 3 (393 aa).

Positions 1–23 (MAQENAAFSPGSEEPPRRRGRQR) are disordered. Over 1-57 (MAQENAAFSPGSEEPPRRRGRQRYVEKDGRCNVQQGNVRETYRYLTDLFTTLVDLQW) the chain is Cytoplasmic. The chain crosses the membrane as a helical span at residues 58 to 82 (RLSLLFFVLAYALTWLFFGAIWWLI). The Extracellular portion of the chain corresponds to 83 to 106 (AYGRGDLEHLEDTAWTPCVNNLNG). The helical; Pore-forming intramembrane region spans 107–118 (FVAAFLFSIETE). An intramembrane region (pore-forming) is located at residues 119 to 125 (TTIGYGH). The short motif at 120 to 125 (TIGYGH) is the Selectivity filter element. The Extracellular segment spans residues 126-134 (RVITDQCPE). A helical membrane pass occupies residues 135 to 156 (GIVLLLLQAILGSMVNAFMVGC). The Cytoplasmic portion of the chain corresponds to 157–393 (MFVKISQPNK…LPPPESESKV (237 aa)). Residues 360 to 393 (KVEEEGAGEGAGAGDGADKEHNGCLPPPESESKV) are disordered. Positions 384–393 (LPPPESESKV) are enriched in pro residues. The PDZ-binding signature appears at 390 to 393 (ESKV).

This sequence belongs to the inward rectifier-type potassium channel (TC 1.A.2.1) family. KCNJ9 subfamily. In terms of assembly, associates with KCNJ3/GIRK1 to form a G-protein-activated heteromultimer pore-forming unit. Interacts (via PDZ-binding motif) with SNX27 (via PDZ domain); the interaction is required when endocytosed to prevent degradation in lysosomes and promote recycling to the plasma membrane. Expressed mainly in the brain, some expression in the skeletal muscle.

Its subcellular location is the membrane. The catalysed reaction is K(+)(in) = K(+)(out). Functionally, inward rectifier potassium channels are characterized by a greater tendency to allow potassium to flow into the cell rather than out of it. Their voltage dependence is regulated by the concentration of extracellular potassium; as external potassium is raised, the voltage range of the channel opening shifts to more positive voltages. The inward rectification is mainly due to the blockage of outward current by internal magnesium. This receptor is controlled by G proteins. Unable to produce channel activity when expressed alone. Forms a functional channel in association with KCNJ3/GIRK1. In Mus musculus (Mouse), this protein is G protein-activated inward rectifier potassium channel 3 (Kcnj9).